The primary structure comprises 129 residues: Fluoride-specific ion channel FluC (129 aa).

The next 4 helical transmembrane spans lie at 10–30 (LLVG…ALAF), 35–55 (PGFP…IGFL), 71–91 (LFLV…MFEG), and 105–125 (LYLA…IIAA). Residues glycine 79 and threonine 82 each coordinate Na(+).

This sequence belongs to the fluoride channel Fluc/FEX (TC 1.A.43) family.

It localises to the cell inner membrane. The enzyme catalyses fluoride(in) = fluoride(out). With respect to regulation, na(+) is not transported, but it plays an essential structural role and its presence is essential for fluoride channel function. In terms of biological role, fluoride-specific ion channel. Important for reducing fluoride concentration in the cell, thus reducing its toxicity. The protein is Fluoride-specific ion channel FluC of Chlorobium luteolum (strain DSM 273 / BCRC 81028 / 2530) (Pelodictyon luteolum).